The following is a 138-amino-acid chain: Phospholipase A2 group V (138 aa).

Residues 1-20 (MKGLLPLAWFLACSVPAVQG) form the signal peptide. Disulfide bonds link C46/C137, C48/C64, C63/C117, C70/C110, C79/C103, and C97/C108. The Ca(2+) site is built by Y47, G49, and G51. H67 is a catalytic residue. D68 serves as a coordination point for Ca(2+). The active site involves D111.

This sequence belongs to the phospholipase A2 family. Requires Ca(2+) as cofactor. Post-translationally, this enzyme lacks one of the seven disulfide bonds found in similar PLA2 proteins. In terms of tissue distribution, heart, placenta and less abundantly, in lung. Detected in the outer and inner plexiform layers of the retina (at protein level). Expressed in monocytes and macrophages.

Its subcellular location is the secreted. It is found in the cell membrane. It localises to the cytoplasmic vesicle. The protein resides in the phagosome. The protein localises to the recycling endosome. Its subcellular location is the golgi apparatus. It is found in the cis-Golgi network. It localises to the trans-Golgi network. It catalyses the reaction a 1,2-diacyl-sn-glycero-3-phosphocholine + H2O = a 1-acyl-sn-glycero-3-phosphocholine + a fatty acid + H(+). It carries out the reaction 1-hexadecanoyl-2-(9Z-octadecenoyl)-sn-glycero-3-phosphocholine + H2O = 1-hexadecanoyl-sn-glycero-3-phosphocholine + (9Z)-octadecenoate + H(+). The enzyme catalyses 1-hexadecanoyl-2-(5Z,8Z,11Z,14Z-eicosatetraenoyl)-sn-glycero-3-phosphocholine + H2O = 1-hexadecanoyl-sn-glycero-3-phosphocholine + (5Z,8Z,11Z,14Z)-eicosatetraenoate + H(+). The catalysed reaction is 1-hexadecanoyl-2-(9Z,12Z-octadecadienoyl)-sn-glycero-3-phosphoethanolamine + H2O = 1-hexadecanoyl-sn-glycero-3-phosphoethanolamine + (9Z,12Z)-octadecadienoate + H(+). It catalyses the reaction 1-hexadecanoyl-2-(5Z,8Z,11Z,14Z-eicosatetraenoyl)-sn-glycero-3-phosphoethanolamine + H2O = 1-hexadecanoyl-sn-glycero-3-phosphoethanolamine + (5Z,8Z,11Z,14Z)-eicosatetraenoate + H(+). It carries out the reaction 1-octadecanoyl-2-(5Z,8Z,11Z,14Z-eicosatetraenoyl)-sn-glycero-3-phospho-(1D-myo-inositol) + H2O = 1-octadecanoyl-sn-glycero-3-phospho-(1D-myo-inositol) + (5Z,8Z,11Z,14Z)-eicosatetraenoate + H(+). The enzyme catalyses 1-hexadecanoyl-2-(9Z-octadecenoyl)-sn-glycero-3-phosphoglycerol + H2O = 1-hexadecanoyl-sn-glycero-3-phosphoglycerol + (9Z)-octadecenoate + H(+). The catalysed reaction is N-hexadecanoyl-1,2-di-(9Z-octadecenoyl)-sn-glycero-3-phosphoethanolamine + H2O = N-hexadecanoyl-1-(9Z-octadecenoyl)-sn-glycero-3-phosphoethanolamine + (9Z)-octadecenoate + H(+). It catalyses the reaction 1'-[1,2-di-(9Z-octadecenoyl)-sn-glycero-3-phospho]-3'-[1-(9Z-octadecenoyl)-sn-glycero-3-phospho]-glycerol + H2O = 1',3'-bis-[1-(9Z-octadecenoyl)-sn-glycero-3-phospho]-glycerol + (9Z)-octadecenoate + H(+). It carries out the reaction 1',3'-bis[1,2-di-(9Z-octadecenoyl)-sn-glycero-3-phospho]-glycerol + H2O = 1'-[1,2-di-(9Z-octadecenoyl)-sn-glycero-3-phospho]-3'-[1-(9Z-octadecenoyl)-sn-glycero-3-phospho]-glycerol + (9Z)-octadecenoate + H(+). It participates in lipid metabolism; phospholipid metabolism. The protein operates within lipid metabolism; leukotriene B4 biosynthesis. Its pathway is lipid metabolism; leukotriene C4 biosynthesis. With respect to regulation, activated by cardiolipin. In terms of biological role, secretory calcium-dependent phospholipase A2 that primarily targets extracellular phospholipids. Hydrolyzes the ester bond of the fatty acyl group attached at sn-2 position of phospholipids (phospholipase A2 activity), preferentially releasing fatty acyl groups with a low degree of unsaturation such as oleoyl (C18:1) and linoleoyl (C18:2) groups. Hydrolyzes low-density lipoprotein (LDL) phospholipids releasing unsaturated fatty acids that drive macrophage polarization toward an M2 phenotype. May act in an autocrine and paracrine manner. Contributes to lipid remodeling of cellular membranes at different subcellular locations and generation of lipid mediators involved in pathogen clearance. Cleaves sn-2 fatty acyl chains of cardiolipin, a major component of the inner membrane of mitochondria and bacterial membranes. Promotes phagocytosis of bacteria in macrophages through production of lysophosphatidylethanolamines. Displays bactericidal activity against Gram-positive bacteria by directly hydrolyzing phospholipids of the bacterial membrane. Promotes phagocytosis and killing of ingested fungi likely through controlling phagosome-lysosome fusion and phagosome maturation. Plays a role in biosynthesis of cysteinyl leukotrienes (CysLTs) in myeloid cells. In eosinophils, triggers perinuclear arachidonate release and LTC4 synthesis in a PLA2G4A-independent way. In neutrophils, amplifies CysLTs biosynthesis initiated by PLA2G4A. Promotes immune complex clearance in macrophages via stimulating synthesis of CysLTs, which act through CYSLTR1 to trigger phagocytosis. May regulate antigen processing in antigen-presenting cells. In pulmonary macrophages regulates IL33 production required for activation of group 2 innate lymphoid cells. May play a role in the biosynthesis of N-acyl ethanolamines that regulate energy metabolism. Hydrolyzes N-acyl phosphatidylethanolamines to N-acyl lysophosphatidylethanolamines, which are further cleaved by a lysophospholipase D to release N-acyl ethanolamines. The polypeptide is Phospholipase A2 group V (PLA2G5) (Homo sapiens (Human)).